We begin with the raw amino-acid sequence, 104 residues long: Small ribosomal subunit protein uS10 (104 aa).

It belongs to the universal ribosomal protein uS10 family. Part of the 30S ribosomal subunit.

In terms of biological role, involved in the binding of tRNA to the ribosomes. This Ruegeria pomeroyi (strain ATCC 700808 / DSM 15171 / DSS-3) (Silicibacter pomeroyi) protein is Small ribosomal subunit protein uS10.